Consider the following 100-residue polypeptide: Thioredoxin (100 aa).

In terms of domain architecture, Thioredoxin spans 1-100 (MKHITNKAEL…PKNELKELLK (100 aa)). A disulfide bond links Cys29 and Cys32.

Belongs to the thioredoxin family.

Participates in various redox reactions through the reversible oxidation of its active center dithiol to a disulfide and catalyzes dithiol-disulfide exchange reactions. The protein is Thioredoxin (trxA) of Mycoplasmoides gallisepticum (strain R(low / passage 15 / clone 2)) (Mycoplasma gallisepticum).